A 48-amino-acid chain; its full sequence is Delta-stichotoxin-Hcr1a (48 aa).

Intrachain disulfides connect C3–C43, C5–C33, and C26–C44. K48 carries the lysine amide; partial; in Delta-stichotoxin-Hcr1f modification.

It belongs to the sea anemone sodium channel inhibitory toxin family. Type II subfamily. In terms of assembly, probably composed of two peptide chains of 12 and 35 residues connected by two disulfide bonds (Cys-3-Cys-43 and Cys-5-Cys-33). Post-translationally, delta-SHTX-Hcr1f (RTX-VI) may be the result of post-translational modification of delta-SHTX-Hcr1a (RTX-III), which would consist of Arg-13 cleavage.

It localises to the secreted. It is found in the nematocyst. Binds to site 3 of voltage-gated sodium channels and inhibits the inactivation process. Specifically inhibits mammalian Nav1.3/SCN3A and Nav1.6/SCN8A sodium channels, as well as insect BgNav1 and VdNav1 sodium channels. Its function is as follows. Binds to site 3 of voltage-gated sodium channels and inhibits the inactivation process. Specifically inhibits mammalian Nav1.2/SCN3A (low inhibition) and Nav1.6/SCN8A sodium channels, as well as insect BgNav1 and VdNav1 sodium channels. This is Delta-stichotoxin-Hcr1a from Radianthus crispa (Leathery sea anemone).